A 363-amino-acid polypeptide reads, in one-letter code: Electron transfer flavoprotein subunit alpha, mitochondrial (363 aa).

The transit peptide at 1-24 (MTRTVLLRALTKNKFVASNAPRSI) directs the protein to the mitochondrion. 303 to 331 (LYMAFGVSGAIQHLAGIKDSKVIVAVNKD) lines the FAD pocket.

It belongs to the ETF alpha-subunit/FixB family. As to quaternary structure, heterodimer of an alpha and a beta subunit. It depends on FAD as a cofactor.

The protein resides in the mitochondrion matrix. Its function is as follows. The electron transfer flavoprotein serves as a specific electron acceptor for several dehydrogenases, including five acyl-CoA dehydrogenases, glutaryl-CoA and sarcosine dehydrogenase. It transfers the electrons to the main mitochondrial respiratory chain via ETF-ubiquinone oxidoreductase (ETF dehydrogenase). Involved in leucine catabolism and in phytol degradation. This Arabidopsis thaliana (Mouse-ear cress) protein is Electron transfer flavoprotein subunit alpha, mitochondrial (ETFA).